The following is a 43-amino-acid chain: Neurotrophin-3 (43 aa).

The protein belongs to the NGF-beta family.

The protein resides in the secreted. Functionally, seems to promote the survival of visceral and proprioceptive sensory neurons. This is Neurotrophin-3 (ntf3) from Raja clavata (Thornback ray).